Here is a 486-residue protein sequence, read N- to C-terminus: N-succinylglutamate 5-semialdehyde dehydrogenase (486 aa).

NAD(+) is bound at residue 220–225 (GSSRTG). Residues E243 and C277 contribute to the active site.

Belongs to the aldehyde dehydrogenase family. AstD subfamily.

It carries out the reaction N-succinyl-L-glutamate 5-semialdehyde + NAD(+) + H2O = N-succinyl-L-glutamate + NADH + 2 H(+). It functions in the pathway amino-acid degradation; L-arginine degradation via AST pathway; L-glutamate and succinate from L-arginine: step 4/5. Catalyzes the NAD-dependent reduction of succinylglutamate semialdehyde into succinylglutamate. The chain is N-succinylglutamate 5-semialdehyde dehydrogenase from Shewanella sp. (strain W3-18-1).